A 103-amino-acid chain; its full sequence is MYAVFQSGGKQHRVAEGHTVRLEKLEVATGETIEFDQVLLVADGETVHVGAPLVEGGKVVAEVISHGRGEKVTIVKFRRRKHHDKKMGHRQWFTEVKITAINA.

The protein belongs to the bacterial ribosomal protein bL21 family. As to quaternary structure, part of the 50S ribosomal subunit. Contacts protein L20.

Its function is as follows. This protein binds to 23S rRNA in the presence of protein L20. This chain is Large ribosomal subunit protein bL21, found in Shewanella loihica (strain ATCC BAA-1088 / PV-4).